A 385-amino-acid chain; its full sequence is Lipid-A-disaccharide synthase 2 (385 aa).

Belongs to the LpxB family.

It catalyses the reaction a lipid X + a UDP-2-N,3-O-bis[(3R)-3-hydroxyacyl]-alpha-D-glucosamine = a lipid A disaccharide + UDP + H(+). The protein operates within bacterial outer membrane biogenesis; LPS lipid A biosynthesis. Condensation of UDP-2,3-diacylglucosamine and 2,3-diacylglucosamine-1-phosphate to form lipid A disaccharide, a precursor of lipid A, a phosphorylated glycolipid that anchors the lipopolysaccharide to the outer membrane of the cell. This is Lipid-A-disaccharide synthase 2 from Legionella pneumophila (strain Paris).